Reading from the N-terminus, the 78-residue chain is Beta-defensin 105A (78 aa).

The signal sequence occupies residues 1–27; the sequence is MALIRKTFYFVFAVFFILVQQPSGCQA. Cystine bridges form between Cys43-Cys74, Cys53-Cys67, and Cys57-Cys73.

It belongs to the beta-defensin family.

The protein localises to the secreted. In terms of biological role, has antimicrobial activity. The protein is Beta-defensin 105A (DEFB105A) of Macaca fascicularis (Crab-eating macaque).